We begin with the raw amino-acid sequence, 149 residues long: Macrodomain Ter protein (149 aa).

It belongs to the MatP family. In terms of assembly, homodimer.

It is found in the cytoplasm. Required for spatial organization of the terminus region of the chromosome (Ter macrodomain) during the cell cycle. Prevents early segregation of duplicated Ter macrodomains during cell division. Binds specifically to matS, which is a 13 bp signature motif repeated within the Ter macrodomain. The sequence is that of Macrodomain Ter protein from Vibrio vulnificus (strain YJ016).